The chain runs to 331 residues: Ketol-acid reductoisomerase (NADP(+)) (331 aa).

The KARI N-terminal Rossmann domain occupies 2-182 (AQLFYDSDAD…GGTRAGILET (181 aa)). Residues 25–28 (YGSQ), Ser-51, Ser-53, and 83–86 (DEFQ) contribute to the NADP(+) site. His-108 is a catalytic residue. NADP(+) is bound at residue Gly-134. The 146-residue stretch at 183-328 (NFKEETETDL…KGLRAMFSWL (146 aa)) folds into the KARI C-terminal knotted domain. Residues Asp-191, Glu-195, Glu-227, and Glu-231 each contribute to the Mg(2+) site. Ser-252 provides a ligand contact to substrate.

The protein belongs to the ketol-acid reductoisomerase family. Mg(2+) serves as cofactor.

The enzyme catalyses (2R)-2,3-dihydroxy-3-methylbutanoate + NADP(+) = (2S)-2-acetolactate + NADPH + H(+). The catalysed reaction is (2R,3R)-2,3-dihydroxy-3-methylpentanoate + NADP(+) = (S)-2-ethyl-2-hydroxy-3-oxobutanoate + NADPH + H(+). It participates in amino-acid biosynthesis; L-isoleucine biosynthesis; L-isoleucine from 2-oxobutanoate: step 2/4. Its pathway is amino-acid biosynthesis; L-valine biosynthesis; L-valine from pyruvate: step 2/4. Functionally, involved in the biosynthesis of branched-chain amino acids (BCAA). Catalyzes an alkyl-migration followed by a ketol-acid reduction of (S)-2-acetolactate (S2AL) to yield (R)-2,3-dihydroxy-isovalerate. In the isomerase reaction, S2AL is rearranged via a Mg-dependent methyl migration to produce 3-hydroxy-3-methyl-2-ketobutyrate (HMKB). In the reductase reaction, this 2-ketoacid undergoes a metal-dependent reduction by NADPH to yield (R)-2,3-dihydroxy-isovalerate. This is Ketol-acid reductoisomerase (NADP(+)) from Prochlorococcus marinus (strain MIT 9211).